Consider the following 391-residue polypeptide: Pectin acetylesterase 7 (391 aa).

A signal peptide spans 1 to 23 (MGRLKQCWSSLLVLAVLVIGTGA). Active-site charge relay system residues include serine 171, aspartate 267, and histidine 334.

It belongs to the pectinacetylesterase family.

It localises to the secreted. It is found in the cell wall. Its function is as follows. Hydrolyzes acetyl esters in homogalacturonan regions of pectin. In type I primary cell wall, galacturonic acid residues of pectin can be acetylated at the O-2 and O-3 positions. Decreasing the degree of acetylation of pectin gels in vitro alters their physical properties. The protein is Pectin acetylesterase 7 of Arabidopsis thaliana (Mouse-ear cress).